Reading from the N-terminus, the 108-residue chain is CDGSH iron-sulfur domain-containing protein 1 (108 aa).

The chain crosses the membrane as a helical; Signal-anchor for type III membrane protein span at residues 14–31 (IAAVTFAAGTAALGYLAY). Residues 32–108 (KKFYAKENRT…GPLIIKKKET (77 aa)) are Cytoplasmic-facing. K42 is covalently cross-linked (Glycyl lysine isopeptide (Lys-Gly) (interchain with G-Cter in ubiquitin)). K55 functions as the Schiff-base intermediate with pyridoxal 5'-phosphate in the catalytic mechanism. An N6-acetyllysine; alternate mark is found at K55 and K68. Residues K55 and K68 each participate in a glycyl lysine isopeptide (Lys-Gly) (interchain with G-Cter in ubiquitin); alternate cross-link. Positions 72 and 74 each coordinate [2Fe-2S] cluster. Glycyl lysine isopeptide (Lys-Gly) (interchain with G-Cter in ubiquitin) cross-links involve residues K78 and K79. Positions 83 and 87 each coordinate [2Fe-2S] cluster. K89 is covalently cross-linked (Glycyl lysine isopeptide (Lys-Gly) (interchain with G-Cter in ubiquitin)). K104 carries the N6-acetyllysine; alternate modification. K104 is covalently cross-linked (Glycyl lysine isopeptide (Lys-Gly) (interchain with G-Cter in ubiquitin); alternate). Glycyl lysine isopeptide (Lys-Gly) (interchain with G-Cter in ubiquitin) cross-links involve residues K105 and K106.

This sequence belongs to the CISD protein family. As to quaternary structure, homodimer. It depends on [2Fe-2S] cluster as a cofactor. Requires pyridoxal 5'-phosphate as cofactor. Post-translationally, ubiquitinated by PRKN during mitophagy, leading to its degradation and enhancement of mitophagy. Deubiquitinated by USP30. In terms of tissue distribution, liver, adipose, skeletal muscle and heart (at protein level). Widely expressed. Expressed at the highest levels in the heart.

The protein localises to the mitochondrion outer membrane. It carries out the reaction L-cysteine + 2-oxoglutarate = 2-oxo-3-sulfanylpropanoate + L-glutamate. L-cysteine transaminase that catalyzes the reversible transfer of the amino group from L-cysteine to the alpha-keto acid 2-oxoglutarate to respectively form 2-oxo-3-sulfanylpropanoate and L-glutamate. The catalytic cycle occurs in the presence of pyridoxal 5'-phosphate (PLP) cofactor that facilitates transamination by initially forming an internal aldimine with the epsilon-amino group of active site Lys-55 residue on the enzyme (PLP-enzyme aldimine), subsequently displaced by formation of an external aldimine with the substrate amino group (PLP-L-cysteine aldimine). The external aldimine is further deprotonated to form a carbanion intermediate, which in the presence of 2-oxoglutarate regenerates PLP yielding final products 2-oxo-3-sulfanylpropanoate and L-glutamate. The proton transfer in carbanion intermediate is suggested to be controlled by the active site lysine residue, whereas PLP stabilizes carbanion structure through electron delocalization, also known as the electron sink effect. Plays a key role in regulating maximal capacity for electron transport and oxidative phosphorylation. May be involved in iron-sulfur cluster shuttling and/or in redox reactions. Can transfer the [2Fe-2S] cluster to an apo-acceptor protein only when in the oxidation state, likely serving as a redox sensor that regulates mitochondrial iron-sulfur cluster assembly and iron trafficking upon oxidative stress. This chain is CDGSH iron-sulfur domain-containing protein 1 (Cisd1), found in Mus musculus (Mouse).